The chain runs to 253 residues: Putative B3 domain-containing protein Os03g0619850 (253 aa).

The TF-B3 DNA-binding region spans 26–119 (MSCFLIRMTT…CFEVMILDSD (94 aa)). 2 disordered regions span residues 126-150 (LKSNRNGVSDESQESEDSEGPAGPP) and 230-253 (HRDADQERQMHHQAVPDQWLEQDS). Positions 230-239 (HRDADQERQM) are enriched in basic and acidic residues.

The protein resides in the nucleus. In Oryza sativa subsp. japonica (Rice), this protein is Putative B3 domain-containing protein Os03g0619850.